The sequence spans 284 residues: tRNA N(3)-cytidine methyltransferase METTL6 (284 aa).

Residues Trp45 and Tyr49 each coordinate S-adenosyl-L-methionine. Residues Tyr49, His61, Glu85, Gly87, Asp110, Asp136, Leu137, and Ile157 each contribute to the S-adenosyl-L-homocysteine site. Positions 87, 110, 136, 137, and 157 each coordinate S-adenosyl-L-methionine.

It belongs to the methyltransferase superfamily. METL family. In terms of assembly, monomer. Interacts with SARS1/SerRS; interaction is mediated via tRNA(Ser) and is required for N(3)-methylcytidine methylation.

The protein localises to the cytoplasm. It is found in the nucleus. The enzyme catalyses cytidine(32) in tRNA(Ser) + S-adenosyl-L-methionine = N(3)-methylcytidine(32) in tRNA(Ser) + S-adenosyl-L-homocysteine + H(+). Functionally, S-adenosyl-L-methionine-dependent methyltransferase that mediates N(3)-methylcytidine modification of residue 32 of the tRNA anticodon loop of tRNA(Ser), including tRNA(Ser)(UGA) and tRNA(Ser)(GCU). Interaction with SARS1/SerRS is required for N(3)-methylcytidine methylation. The protein is tRNA N(3)-cytidine methyltransferase METTL6 of Homo sapiens (Human).